A 691-amino-acid chain; its full sequence is Elongation factor G (691 aa).

The tr-type G domain occupies 8–283 (KKVRNIGIAA…AVVAYLPAPD (276 aa)). Residues 17 to 24 (AHIDAGKT), 81 to 85 (DTPGH), and 135 to 138 (NKMD) contribute to the GTP site.

It belongs to the TRAFAC class translation factor GTPase superfamily. Classic translation factor GTPase family. EF-G/EF-2 subfamily.

It localises to the cytoplasm. Its function is as follows. Catalyzes the GTP-dependent ribosomal translocation step during translation elongation. During this step, the ribosome changes from the pre-translocational (PRE) to the post-translocational (POST) state as the newly formed A-site-bound peptidyl-tRNA and P-site-bound deacylated tRNA move to the P and E sites, respectively. Catalyzes the coordinated movement of the two tRNA molecules, the mRNA and conformational changes in the ribosome. The protein is Elongation factor G of Campylobacter jejuni subsp. jejuni serotype O:6 (strain 81116 / NCTC 11828).